The sequence spans 111 residues: Iron-sulfur cluster assembly protein CyaY (111 aa).

The protein belongs to the frataxin family.

Its function is as follows. Involved in iron-sulfur (Fe-S) cluster assembly. May act as a regulator of Fe-S biogenesis. This chain is Iron-sulfur cluster assembly protein CyaY, found in Cupriavidus metallidurans (strain ATCC 43123 / DSM 2839 / NBRC 102507 / CH34) (Ralstonia metallidurans).